The following is a 529-amino-acid chain: Ribonuclease Y (529 aa).

Residues 4–24 traverse the membrane as a helical segment; it reads GLIYISLEVLVACLITALIMY. The KH domain maps to 216–297; the sequence is LTSRIALPCS…NRIEEVYHRV (82 aa). In terms of domain architecture, HD spans 342–435; sequence ALQHSKEVAL…VCAADALSAG (94 aa).

The protein belongs to the RNase Y family.

The protein localises to the cell membrane. Functionally, endoribonuclease that initiates mRNA decay. The polypeptide is Ribonuclease Y (Helicobacter pylori (strain J99 / ATCC 700824) (Campylobacter pylori J99)).